We begin with the raw amino-acid sequence, 136 residues long: T-cell receptor beta chain V region LB2 (136 aa).

The first 21 residues, 1 to 21 (MNKWVFCWVTLCLLTVETTHG), serve as a signal peptide directing secretion. The v segment stretch occupies residues 22–116 (DGGIITQTPK…EMTVFLCASS (95 aa)). Cysteine 45 and cysteine 113 are oxidised to a cystine. Positions 117–120 (IRLA) are d segment. A j segment region spans residues 121-136 (SAETLYFGSGTRLTVL).

This is T-cell receptor beta chain V region LB2 from Mus musculus (Mouse).